The following is a 439-amino-acid chain: Large ribosomal subunit protein mL44 (439 aa).

2 disordered regions span residues 39-73 (QSTA…SLPS) and 247-282 (KAME…YGNP). Residues 247-257 (KAMEEQDQDKT) show a composition bias toward basic and acidic residues. A compositionally biased stretch (acidic residues) spans 258 to 274 (PDEEEAEMVANEQDQDV).

Belongs to the ribonuclease III family. Mitochondrion-specific ribosomal protein mL44 subfamily. In terms of assembly, component of the mitochondrial large ribosomal subunit (mt-LSU). Mature N.crassa 74S mitochondrial ribosomes consist of a small (37S) and a large (54S) subunit. The 37S small subunit contains a 16S ribosomal RNA (16S mt-rRNA) and 32 different proteins. The 54S large subunit contains a 23S rRNA (23S mt-rRNA) and 42 different proteins. mL44 forms a heterodimer with mL57 and stabilizes rRNA expansion segments 1/2 at a membrane-facing protuberance close to the point of attachment of the ribosome to the translocon in the membrane.

It localises to the mitochondrion. In terms of biological role, component of the mitochondrial ribosome (mitoribosome), a dedicated translation machinery responsible for the synthesis of mitochondrial genome-encoded proteins, including at least some of the essential transmembrane subunits of the mitochondrial respiratory chain. The mitoribosomes are attached to the mitochondrial inner membrane and translation products are cotranslationally integrated into the membrane. The polypeptide is Large ribosomal subunit protein mL44 (mrpl3) (Neurospora crassa (strain ATCC 24698 / 74-OR23-1A / CBS 708.71 / DSM 1257 / FGSC 987)).